The chain runs to 543 residues: Keratin, type II cytoskeletal 75 (543 aa).

Residues 1–16 show a composition bias toward polar residues; the sequence is MSRQSTITFQTSSRRG. Residues 1 to 48 are disordered; that stretch reads MSRQSTITFQTSSRRGFSTASATTPATSRSRFSSASVTHSPAGSGGLG. The segment at 1-144 is head; that stretch reads MSRQSTITFQ…DPNIQRVRKE (144 aa). A compositionally biased stretch (low complexity) spans 17–36; that stretch reads FSTASATTPATSRSRFSSAS. The segment at 145–180 is coil 1A; that stretch reads EREQIKTLNNKFASFIDKVRFLEQQNKVLETKWSLL. The IF rod domain maps to 145–458; that stretch reads EREQIKTLNN…KLLEGEECRL (314 aa). The segment at 181 to 199 is linker 1; the sequence is QEQGTRTVRQSLEPFFEAY. Residues 200–292 are coil 1B; that stretch reads ITDLRRQLDS…LFEAELCQMQ (93 aa). The interval 293-315 is linker 12; the sequence is TRVSDTSVVLSMDNNRSLDLDSI. The tract at residues 316–454 is coil 2; sequence IAEVKAQYEE…ATYRKLLEGE (139 aa). The tail stretch occupies residues 455 to 543; that stretch reads ECRLSGEGVS…TSSSRKSYKH (89 aa). The disordered stretch occupies residues 511–543; the sequence is SSFSNSSSRGLGGSGSSFKFVSTTSSSRKSYKH. Residues 526-543 are compositionally biased toward low complexity; it reads SSFKFVSTTSSSRKSYKH.

Belongs to the intermediate filament family. Heterodimer of a type I and a type II keratin. May associate with KRT17.

Plays a central role in hair and nail formation. Essential component of keratin intermediate filaments in the companion layer of the hair follicle. This chain is Keratin, type II cytoskeletal 75 (KRT75), found in Bos taurus (Bovine).